Here is a 156-residue protein sequence, read N- to C-terminus: Ribosomal RNA large subunit methyltransferase H (156 aa).

S-adenosyl-L-methionine contacts are provided by residues leucine 72, glycine 104, and 123-128 (FGAMVW).

It belongs to the RNA methyltransferase RlmH family. In terms of assembly, homodimer.

The protein localises to the cytoplasm. It carries out the reaction pseudouridine(1915) in 23S rRNA + S-adenosyl-L-methionine = N(3)-methylpseudouridine(1915) in 23S rRNA + S-adenosyl-L-homocysteine + H(+). Functionally, specifically methylates the pseudouridine at position 1915 (m3Psi1915) in 23S rRNA. The chain is Ribosomal RNA large subunit methyltransferase H from Ruegeria pomeroyi (strain ATCC 700808 / DSM 15171 / DSS-3) (Silicibacter pomeroyi).